We begin with the raw amino-acid sequence, 179 residues long: Large ribosomal subunit protein uL5 (179 aa).

The protein belongs to the universal ribosomal protein uL5 family. Part of the 50S ribosomal subunit; part of the 5S rRNA/L5/L18/L25 subcomplex. Contacts the 5S rRNA and the P site tRNA. Forms a bridge to the 30S subunit in the 70S ribosome.

Its function is as follows. This is one of the proteins that bind and probably mediate the attachment of the 5S RNA into the large ribosomal subunit, where it forms part of the central protuberance. In the 70S ribosome it contacts protein S13 of the 30S subunit (bridge B1b), connecting the 2 subunits; this bridge is implicated in subunit movement. Contacts the P site tRNA; the 5S rRNA and some of its associated proteins might help stabilize positioning of ribosome-bound tRNAs. The protein is Large ribosomal subunit protein uL5 of Shewanella loihica (strain ATCC BAA-1088 / PV-4).